The following is a 377-amino-acid chain: Glutamate 5-kinase (377 aa).

Residue Lys-17 coordinates ATP. Substrate contacts are provided by Ser-56, Asp-143, and Asn-155. Position 217–223 (217–223 (SGGMFSK)) interacts with ATP. The PUA domain occupies 282 to 360 (AGDLVIDDGA…CEIESILGKC (79 aa)).

It belongs to the glutamate 5-kinase family.

The protein resides in the cytoplasm. The catalysed reaction is L-glutamate + ATP = L-glutamyl 5-phosphate + ADP. It functions in the pathway amino-acid biosynthesis; L-proline biosynthesis; L-glutamate 5-semialdehyde from L-glutamate: step 1/2. In terms of biological role, catalyzes the transfer of a phosphate group to glutamate to form L-glutamate 5-phosphate. This Maridesulfovibrio salexigens (strain ATCC 14822 / DSM 2638 / NCIMB 8403 / VKM B-1763) (Desulfovibrio salexigens) protein is Glutamate 5-kinase.